Consider the following 206-residue polypeptide: Large ribosomal subunit protein uL22m (206 aa).

A mitochondrion-targeting transit peptide spans 1–40; the sequence is MAAAVLGQLGALWIHNLRSRGKLALGVLPQSYIHTSASLD.

The protein belongs to the universal ribosomal protein uL22 family. Component of the mitochondrial large ribosomal subunit (mt-LSU). Mature mammalian 55S mitochondrial ribosomes consist of a small (28S) and a large (39S) subunit. The 28S small subunit contains a 12S ribosomal RNA (12S mt-rRNA) and 30 different proteins. The 39S large subunit contains a 16S rRNA (16S mt-rRNA), a copy of mitochondrial valine transfer RNA (mt-tRNA(Val)), which plays an integral structural role, and 52 different proteins.

It is found in the mitochondrion. In Homo sapiens (Human), this protein is Large ribosomal subunit protein uL22m (MRPL22).